The following is a 234-amino-acid chain: Triosephosphate isomerase (234 aa).

8–10 contributes to the substrate binding site; it reads NFK. The active-site Electrophile is the His90. Glu159 functions as the Proton acceptor in the catalytic mechanism. Substrate contacts are provided by residues Gly165, Ser197, and 218–219; that span reads GS.

As to quaternary structure, homodimer.

The protein resides in the cytoplasm. The enzyme catalyses D-glyceraldehyde 3-phosphate = dihydroxyacetone phosphate. Its pathway is carbohydrate biosynthesis; gluconeogenesis. It participates in carbohydrate degradation; glycolysis; D-glyceraldehyde 3-phosphate from glycerone phosphate: step 1/1. In terms of biological role, involved in the gluconeogenesis. Catalyzes stereospecifically the conversion of dihydroxyacetone phosphate (DHAP) to D-glyceraldehyde-3-phosphate (G3P). This Helicobacter pylori (strain ATCC 700392 / 26695) (Campylobacter pylori) protein is Triosephosphate isomerase.